Reading from the N-terminus, the 136-residue chain is MARTKQTARKSTGGKAPRKQLASKAARKSAPVSGGVKKPHRYKPGTVALREIRRFQKSTELLIRKLPFQRLVREIAQDFKSDLRFQSSAIGALQEAVEAYLVGLFEDTNLCAIHAKRVTIQKKDIQLARRLRGERS.

Residues Met-1–Tyr-42 form a disordered region. N6,N6,N6-trimethyllysine; alternate is present on Lys-5. At Lys-5 the chain carries N6,N6-dimethyllysine; alternate. 2 positions are modified to N6-methyllysine; alternate: Lys-5 and Lys-10. Position 10 is an N6-acetyllysine; alternate (Lys-10). Position 11 is a phosphoserine (Ser-11). N6,N6-dimethyllysine; alternate is present on Lys-15. Residues Lys-15, Lys-19, Lys-24, Lys-28, and Lys-37 each carry the N6-acetyllysine; alternate modification. Lys-19, Lys-24, Lys-28, and Lys-37 each carry N6-methyllysine; alternate. An N6,N6,N6-trimethyllysine; alternate mark is found at Lys-28 and Lys-37. N6,N6-dimethyllysine; alternate is present on residues Lys-28 and Lys-37. N6-acetyllysine is present on residues Lys-57 and Lys-65. Lys-80 is modified (N6,N6,N6-trimethyllysine; alternate). Lys-80 is modified (N6,N6-dimethyllysine; alternate). Position 80 is an N6-methyllysine; alternate (Lys-80).

The protein belongs to the histone H3 family. As to quaternary structure, the nucleosome is a histone octamer containing two molecules each of H2A, H2B, H3 and H4 assembled in one H3-H4 heterotetramer and two H2A-H2B heterodimers. The octamer wraps approximately 147 bp of DNA. Phosphorylated to form H3S10ph. H3S10ph promotes subsequent H3K14ac formation and is required for transcriptional activation through TBP recruitment to the promoters. Post-translationally, mono-, di- and trimethylated by the COMPASS complex to form H3K4me1/2/3. H3K4me activates gene expression by regulating transcription elongation and plays a role in telomere length maintenance. H3K4me enrichment correlates with transcription levels, and occurs in a 5' to 3' gradient with H3K4me3 enrichment at the 5'-end of genes, shifting to H3K4me2 and then H3K4me1. Methylated by SET2 to form H3K36me. H3K36me represses gene expression. Methylated by DOT1 to form H3K79me. H3K79me is required for association of SIR proteins with telomeric regions and for telomeric silencing. The COMPASS-mediated formation of H3K4me2/3 and the DOT1-mediated formation of H3K79me require H2BK123ub1. In terms of processing, acetylation of histone H3 leads to transcriptional activation. H3K14ac formation by GCN5 is promoted by H3S10ph. H3K14ac can also be formed by ESA1. H3K56ac formation occurs predominantly in newly synthesized H3 molecules during G1, S and G2/M of the cell cycle and may be involved in DNA repair.

Its subcellular location is the nucleus. The protein resides in the chromosome. In terms of biological role, core component of nucleosome. Nucleosomes wrap and compact DNA into chromatin, limiting DNA accessibility to the cellular machineries which require DNA as a template. Histones thereby play a central role in transcription regulation, DNA repair, DNA replication and chromosomal stability. DNA accessibility is regulated via a complex set of post-translational modifications of histones, also called histone code, and nucleosome remodeling. This Lodderomyces elongisporus (strain ATCC 11503 / CBS 2605 / JCM 1781 / NBRC 1676 / NRRL YB-4239) (Yeast) protein is Histone H3.3 (HHT3).